Reading from the N-terminus, the 163-residue chain is F-box protein At2g35280 (163 aa).

In terms of domain architecture, F-box spans 8 to 57; that stretch reads ISRLEALPQDLLREIVAKIGVKSAEDYHNCILSCKELGASANDERVLKTL.

The polypeptide is F-box protein At2g35280 (Arabidopsis thaliana (Mouse-ear cress)).